A 150-amino-acid polypeptide reads, in one-letter code: Nucleoside diphosphate kinase (150 aa).

6 residues coordinate ATP: K9, F57, R85, T91, R102, and N112. H115 (pros-phosphohistidine intermediate) is an active-site residue.

Belongs to the NDK family. Homotetramer. Requires Mg(2+) as cofactor.

The protein resides in the cytoplasm. It catalyses the reaction a 2'-deoxyribonucleoside 5'-diphosphate + ATP = a 2'-deoxyribonucleoside 5'-triphosphate + ADP. The enzyme catalyses a ribonucleoside 5'-diphosphate + ATP = a ribonucleoside 5'-triphosphate + ADP. In terms of biological role, major role in the synthesis of nucleoside triphosphates other than ATP. The ATP gamma phosphate is transferred to the NDP beta phosphate via a ping-pong mechanism, using a phosphorylated active-site intermediate. In Thermosynechococcus vestitus (strain NIES-2133 / IAM M-273 / BP-1), this protein is Nucleoside diphosphate kinase.